A 357-amino-acid polypeptide reads, in one-letter code: DnaJ homolog subfamily C member 25 (357 aa).

The helical transmembrane segment at Trp-19–Val-39 threads the bilayer. The J domain maps to Asp-48–Leu-121. Helical transmembrane passes span Val-147–Ser-167 and Leu-241–Cys-261.

Belongs to the DNAJC25 family.

The protein localises to the membrane. This chain is DnaJ homolog subfamily C member 25 (Dnajc25), found in Mus musculus (Mouse).